The primary structure comprises 170 residues: Tubulin polymerization-promoting protein family member 2 (170 aa).

The tract at residues 127–170 (TGTHKERFDESGKGKGIAGREEMTDNTGYVSGYKGSGTYDKKTK) is disordered. Positions 129-149 (THKERFDESGKGKGIAGREEM) are enriched in basic and acidic residues.

The protein belongs to the TPPP family. In terms of tissue distribution, expressed in spermatids. Detected in liver cancer (at protein level).

It localises to the cytoplasm. It is found in the cytosol. The protein localises to the cell projection. Its subcellular location is the cilium. The protein resides in the flagellum. Its function is as follows. Probable regulator of microtubule dynamics required for sperm motility. In contrast to other members of the family, has no microtubule bundling activity. This is Tubulin polymerization-promoting protein family member 2 from Homo sapiens (Human).